A 1439-amino-acid chain; its full sequence is MEEALEMARAKDTKERMAAVERLHQLLEASRKSLSPAEVTSLVDSCLDLLKDSNFRVSQGALQALASAAVLAGEHLKLHLNALVPAVVERLGDSKQPVRDAARRLLTTLMEVSSPTIIVERAGSYAWMHKSWRVREEFARTVTSAIGLFASTELPLQRVILAPILQMLNDPNQAVREAAILCIEEMYMQGGSQFREELQRHHLPSYMVKDINARLERIEPQLRSTDGRSAHHVVNEVKASSVNPKKSSPRAKAPTRENSLFGGDADITEKPIEPIKVYSEKELIREFEKIAATLVPEKDWSMRISAMRRVEGLVAGGATDYSCFRGLLKQLVGPLSTQLADRRSTIVKQACHLLCLLSKELLGDFEACAETFIPVLFKLVVITVLVIAESADNCIKTMLRNCKAARVLPRIAESAKHDRNAILRARCCEYALLTLEHWPDAPEIQRSVDLYEDLIRCCVADAMSEVRATARMCYRMFAKTWPDRSRRLFSSFDPVIQRLINEEDGGIHRRHASPSVRERHSQPSFSQTSAPSNLPGYGTSAIVAMDRSSNLSSGGSLSSGLLLSQSKDVNKGSERSLESVLQSSKQKVSAIESMLRGLHISDRQNPAALRSSSLDLGVDPPSSRDPPFHAVAPASNSHTSSAAAESTHSINKGSNRNGGLGLSDIITQIQASKDSGRSSYRGNLLSESHPTFSSLTAKRGSERNERSSLEESNDAREVRRFMAGHFDRQQMDTAYRDLTFRESNASHVPNFQRPLLRKNVGGRMSAGRRRSFDDSQLQIGDISNFVDGPASLNEALNDGLNSSSDWCARVAAFNFLQTLLQQGPKGAQEVIQSFEKVMKLFLRHLDDPHHKVAQAALSTLADLIPSCRKPFESYMERVLPHVFSRLIDPKEVVRQPCSSTLEIVSKTYSVDSLLPALLRSLDEQRSPKAKLAVIEFAINSFNRYAGNPEISGNSGILKLWLAKLTPLTRDKNTKLKEASITCIISVYNHYDSAGLLNYILSLSVEEQNSLRRALKQYTPRIEVDLLNYMQSKKEKQRIKSYDPSDAIGTSSEEGYAGASKKNIFLGRYSGGSIDSDSGRKWSSSQEPTMITGGVGQNVSSGTQEKLYQNVRTGISSASDLLNPKDSDYTFASAGQNSISRTSPNGSSENIEILDDLSPPHLEKNGLNLTSVDSLEGRHENEVSRELDLGHYMLTSIKVNTTPESGPSIPQILHMINGSDGSPSSSKKSGLQQLIEASVANEESVWTKYFNQILTVVLEVLDDEDFSIKELALSLISEMLKSQKDAMEDSVEIVIEKLLHVSKDTVPKVSTEAEQCLTTVLSQYDPFRCLSVIVPLLVTEDEKTLVACINCLTKLVGRLSQEELMDQLSSFLPAVFEAFGSQSADVRKTVVFCLVDIYIMLGKAFLPYLEGLNSTQVRLVTIYANRISQARNGAPIDADT.

The residue at position 1 (Met1) is an N-acetylmethionine. 4 HEAT repeats span residues 1-32 (MEEALEMARAKDTKERMAAVERLHQLLEASRK), 36-74 (PAEVTSLVDSCLDLLKDSNFRVSQGALQALASAAVLAGE), 77-115 (KLHLNALVPAVVERLGDSKQPVRDAARRLLTTLMEVSSP), and 154-192 (LPLQRVILAPILQMLNDPNQAVREAAILCIEEMYMQGGS). Positions 238 to 264 (KASSVNPKKSSPRAKAPTRENSLFGGD) are disordered. HEAT repeat units lie at residues 281–319 (KELIREFEKIAATLVPEKDWSMRISAMRRVEGLVAGGAT), 325–363 (RGLLKQLVGPLSTQLADRRSTIVKQACHLLCLLSKELLG), 366–401 (EACAETFIPVLFKLVVITVLVIAESADNCIKTMLRN), 402–439 (CKAARVLPRIAESAKHDRNAILRARCCEYALLTLEHWP), and 486–525 (RRLFSSFDPVIQRLINEEDGGIHRRHASPSVRERHSQPSF). Disordered regions lie at residues 503-539 (EDGGIHRRHASPSVRERHSQPSFSQTSAPSNLPGYGT), 611-660 (SSSL…NGGL), and 672-715 (SKDS…SNDA). Polar residues predominate over residues 522–532 (QPSFSQTSAPS). Positions 632-649 (APASNSHTSSAAAESTHS) are enriched in low complexity. The span at 672–696 (SKDSGRSSYRGNLLSESHPTFSSLT) shows a compositional bias: polar residues. Residues 699–715 (RGSERNERSSLEESNDA) show a composition bias toward basic and acidic residues. HEAT repeat units follow at residues 809–830 (RVAAFNFLQTLLQQGPKGAQEV), 831–869 (IQSFEKVMKLFLRHLDDPHHKVAQAALSTLADLIPSCRK), 872–910 (ESYMERVLPHVFSRLIDPKEVVRQPCSSTLEIVSKTYSV), 912–950 (SLLPALLRSLDEQRSPKAKLAVIEFAINSFNRYAGNPEI), 954–992 (SGILKLWLAKLTPLTRDKNTKLKEASITCIISVYNHYDS), and 994–1031 (GLLNYILSLSVEEQNSLRRALKQYTPRIEVDLLNYMQS). A compositionally biased stretch (polar residues) spans 1074-1088 (DSDSGRKWSSSQEPT). The disordered stretch occupies residues 1074–1101 (DSDSGRKWSSSQEPTMITGGVGQNVSSG). HEAT repeat units lie at residues 1201–1239 (TPESGPSIPQILHMINGSDGSPSSSKKSGLQQLIEASVA), 1246–1284 (TKYFNQILTVVLEVLDDEDFSIKELALSLISEMLKSQKD), 1287–1325 (EDSVEIVIEKLLHVSKDTVPKVSTEAEQCLTTVLSQYDP), 1327–1360 (RCLSVIVPLLVTEDEKTLVACINCLTKLVGRLSQ), 1364–1402 (MDQLSSFLPAVFEAFGSQSADVRKTVVFCLVDIYIMLGK), and 1405–1439 (LPYLEGLNSTQVRLVTIYANRISQARNGAPIDADT).

It belongs to the CLASP family. Expressed at a low level in all tissues, mostly in young developing tissues.

Its subcellular location is the cytoplasm. The protein localises to the cytoskeleton. It localises to the spindle. The protein resides in the phragmoplast. It is found in the cell cortex. Cortical microtubule plus-end tracking protein required for cell morphogenesis and cell division. Promotes the stabilization of dynamic microtubules during mitosis. Regulates microtubule-cortex attachment, thereby contributing to self-organization of cortical microtubules and subsequent cell shape. The sequence is that of CLIP-associated protein (CLASP) from Arabidopsis thaliana (Mouse-ear cress).